The chain runs to 139 residues: MMARLWKTTWFLLAILVALVAFSYQVKRKTFIRVEEVNALESSVKETLEYVTEEYNKKSEDLYNFRILRILKIEKQMTNHMEFHITVEMQRTTCLKTEKNLCNVQEGELHKQIQCYFSVYVIPWLEVFKMLKKNCTNSS.

A signal peptide spans 1–28 (MMARLWKTTWFLLAILVALVAFSYQVKR). Intrachain disulfides connect Cys-94–Cys-102 and Cys-115–Cys-135. The N-linked (GlcNAc...) asparagine glycan is linked to Asn-134.

Belongs to the cystatin family.

The protein localises to the secreted. In terms of biological role, has antibacterial activity against the Gram-negative bacteria E.coli. May play a role in sperm maturation and fertilization. This is Cystatin-11 (Cst11) from Rattus norvegicus (Rat).